The sequence spans 167 residues: 2-amino-4-hydroxy-6-hydroxymethyldihydropteridine pyrophosphokinase (167 aa).

The protein belongs to the HPPK family.

The catalysed reaction is 6-hydroxymethyl-7,8-dihydropterin + ATP = (7,8-dihydropterin-6-yl)methyl diphosphate + AMP + H(+). It functions in the pathway cofactor biosynthesis; tetrahydrofolate biosynthesis; 2-amino-4-hydroxy-6-hydroxymethyl-7,8-dihydropteridine diphosphate from 7,8-dihydroneopterin triphosphate: step 4/4. Its function is as follows. Catalyzes the transfer of pyrophosphate from adenosine triphosphate (ATP) to 6-hydroxymethyl-7,8-dihydropterin, an enzymatic step in folate biosynthesis pathway. This Bacillus subtilis (strain 168) protein is 2-amino-4-hydroxy-6-hydroxymethyldihydropteridine pyrophosphokinase (folK).